Reading from the N-terminus, the 351-residue chain is Uroporphyrinogen decarboxylase (351 aa).

Substrate is bound by residues 25 to 29, D74, Y151, S206, and H325; that span reads RQAGR.

It belongs to the uroporphyrinogen decarboxylase family. In terms of assembly, homodimer.

Its subcellular location is the cytoplasm. The catalysed reaction is uroporphyrinogen III + 4 H(+) = coproporphyrinogen III + 4 CO2. Its pathway is porphyrin-containing compound metabolism; protoporphyrin-IX biosynthesis; coproporphyrinogen-III from 5-aminolevulinate: step 4/4. Its function is as follows. Catalyzes the decarboxylation of four acetate groups of uroporphyrinogen-III to yield coproporphyrinogen-III. In Chlorobaculum parvum (strain DSM 263 / NCIMB 8327) (Chlorobium vibrioforme subsp. thiosulfatophilum), this protein is Uroporphyrinogen decarboxylase.